Reading from the N-terminus, the 177-residue chain is UPF0102 protein BPP4042 (177 aa).

Positions 13–43 (AAQAQRRLHRRPPASPRASPGARDGGSPTQR) are disordered.

Belongs to the UPF0102 family.

This is UPF0102 protein BPP4042 from Bordetella parapertussis (strain 12822 / ATCC BAA-587 / NCTC 13253).